The sequence spans 792 residues: MAAPSLLNWRRVSSFTGPVPRARHGHRAVAIRELMIIFGGGNEGIADELHVYNTATNQWFLPAVRGDIPPGCAAHGFVCDGTRILVFGGMVEYGRYSNELYELQASRWLWKKVKPHPPPSGLPPCPRLGHSFSLYGNKCYLFGGLANESEDSNNNVPRYLNDFYELELQHGSGVVGWSIPVTKGVVPSPRESHTAVIYCKKDSGSPKMYVFGGMCGARLDDLWQLDLETMSWSKPETKGTVPLPRSLHTASVIGNKMYIFGGWVPHKGENTETSPHDCEWRCTSSFSYLNLDTTEWTTLVSDSQEDKKNSRPRPRAGHCAVAIGTRLYFWSGRDGYKKALNSQVCCKDLWYLDTEKPPAPSQVQLIKATTNSFHVKWDEVSTVEGYLLQLSTDLPYQAASSDSSAAPNMQGVRMDPHRQGSNNIVPNSINDTINSTKTEQPATKETSMKNKPDFKALTDSNAILYPSLASNASNHNSHVVDMLRKNEGPHTSANVGVLSSCLDVRTVIPETSVSSTVSSTQTMVTQQTIKTESSSTNGAVVKDETSLTTFSTKSEVDETYALPATKISRVETHATATPFSKETPSNPVATVKAGERQWCDVGIFKNNTALVSQFYLLPKGKQSISKVGNADVPDYSLLKKQDLVPGTGYRFRVAAINGCGIGPFSKISEFKTCIPGFPGAPSAVRISKNVEGIHLSWEPPTSPSGNILEYSAYLAIRTAQIQDNPSQLVFMRIYCGLKTSCIVTAGQLANAHIDYTSRPAIVFRISAKNEKGYGPATQVRWLQGNNKKAPLN.

4 Kelch repeats span residues 34 to 79 (LMII…GFVC), 83 to 130 (RILV…RLGH), 207 to 255 (KMYV…VIGN), and 257 to 303 (MYIF…VSDS). In terms of domain architecture, Fibronectin type-III 1 spans 359–449 (APSQVQLIKA…QPATKETSMK (91 aa)). The tract at residues 399–447 (ASSDSSAAPNMQGVRMDPHRQGSNNIVPNSINDTINSTKTEQPATKETS) is disordered. Positions 419–445 (QGSNNIVPNSINDTINSTKTEQPATKE) are enriched in polar residues. Lys553 is covalently cross-linked (Glycyl lysine isopeptide (Lys-Gly) (interchain with G-Cter in SUMO2)). Fibronectin type-III domains follow at residues 583–675 (TPSN…TCIP) and 677–787 (FPGA…GNNK).

In terms of assembly, binds KMT2A/MLL1. Component of the MLL1/MLL complex, at least composed of KMT2A/MLL1, ASH2L, RBBP5, DPY30, WDR5, MEN1, HCFC1 and HCFC2. Interacts with TASOR. As to expression, highly expressed in testis. Detected at lower levels in spleen, thymus, prostate, ovary, small intestine and colon.

It is found in the cytoplasm. The protein resides in the nucleus. The protein is Host cell factor 2 (HCFC2) of Homo sapiens (Human).